The sequence spans 185 residues: Ribosome-recycling factor (185 aa).

The protein belongs to the RRF family.

The protein resides in the cytoplasm. Its function is as follows. Responsible for the release of ribosomes from messenger RNA at the termination of protein biosynthesis. May increase the efficiency of translation by recycling ribosomes from one round of translation to another. This chain is Ribosome-recycling factor, found in Kineococcus radiotolerans (strain ATCC BAA-149 / DSM 14245 / SRS30216).